The chain runs to 370 residues: Aspartate-semialdehyde dehydrogenase (370 aa).

Residues 10–13 (RGMV), 37–38 (TS), and Gln-73 each bind NADP(+). Phosphate is bound at residue Arg-102. The active-site Acyl-thioester intermediate is the Cys-135. Residue Gln-162 coordinates substrate. Residues 165–166 (SG) and Pro-193 each bind NADP(+). Glu-241 is a binding site for substrate. Residue Lys-244 coordinates phosphate. Arg-268 contributes to the substrate binding site. His-275 serves as the catalytic Proton acceptor. Residue Gln-351 coordinates NADP(+).

Belongs to the aspartate-semialdehyde dehydrogenase family. As to quaternary structure, homodimer.

The catalysed reaction is L-aspartate 4-semialdehyde + phosphate + NADP(+) = 4-phospho-L-aspartate + NADPH + H(+). It functions in the pathway amino-acid biosynthesis; L-lysine biosynthesis via DAP pathway; (S)-tetrahydrodipicolinate from L-aspartate: step 2/4. Its pathway is amino-acid biosynthesis; L-methionine biosynthesis via de novo pathway; L-homoserine from L-aspartate: step 2/3. It participates in amino-acid biosynthesis; L-threonine biosynthesis; L-threonine from L-aspartate: step 2/5. In terms of biological role, catalyzes the NADPH-dependent formation of L-aspartate-semialdehyde (L-ASA) by the reductive dephosphorylation of L-aspartyl-4-phosphate. The chain is Aspartate-semialdehyde dehydrogenase (asd) from Pseudomonas aeruginosa (strain ATCC 15692 / DSM 22644 / CIP 104116 / JCM 14847 / LMG 12228 / 1C / PRS 101 / PAO1).